A 387-amino-acid chain; its full sequence is EARP and GARP complex-interacting protein 1 (387 aa).

M1 carries the N-acetylmethionine modification. WD repeat units lie at residues 132-172 (TAHS…SQAV), 180-222 (GGKG…QIYC), 226-266 (AHGQ…EPVK), and 270-310 (EHSH…SEPF). Residues 310–334 (FGHLVDDDDISDQEDHRSEEKSKEP) form a disordered region. The residue at position 320 (S320) is a Phosphoserine. Residues 322–334 (QEDHRSEEKSKEP) show a composition bias toward basic and acidic residues. Residues 345-385 (EHEDSVYAVDWSSADPWLFASLSYDGRLVINRVPRALKYHI) form a WD 5 repeat.

This sequence belongs to the WD repeat EIPR1 family. Interacts with two multisubunit tethering complexes: EARP composed of VPS50, VPS51, VPS52 and VPS53 subunits and GARP complex composed of VPS51, VPS52, VPS53 and VPS54 subunits. Interacts with SNAP29.

The protein resides in the golgi apparatus. The protein localises to the trans-Golgi network. Acts as a component of endosomal retrieval machinery that is involved in protein transport from early endosomes to either recycling endosomes or the trans-Golgi network. Mediates the recruitment of Golgi-associated retrograde protein (GARP) complex to the trans-Golgi network and controls early endosome-to-Golgi transport of internalized protein. Promotes the recycling of internalized transferrin receptor (TFRC) to the plasma membrane through interaction with endosome-associated recycling protein (EARP) complex. Controls proper insulin distribution and secretion, and retention of cargo in mature dense core vesicles. Required for the stability of the endosome-associated retrograde protein (EARP) complex subunits and for proper localization and association of EARP with membranes. The chain is EARP and GARP complex-interacting protein 1 from Macaca fascicularis (Crab-eating macaque).